We begin with the raw amino-acid sequence, 681 residues long: MAPQVWRRRTLERCLTEVGKATGRPECFLTIQEGLASKFTSLTKVLYDFNKILENGRIHGSPLQKLVIENFDDEQIWQQLELQNEPILQYFQNAVSETINDEDISLLPESEEQEREEDGSEIEADDKEDLEDLEEEEVSDMGNDDPEMGERAENSSKSDLRKSPVFSDEDSDLDFDISKLEQQSKVQNKGQGKPREKSIVDDKFFKLSEMEAYLENIEKEEERKDDNDEEEEDIDFFEDIDSDEDEGGLFGSKKLKSGKSSRNLKYKDFFDPVESDEDITNVHDDELDSNKEDDEIAEEEAEELSISETDEDDDLQENEDNKQHKESLKRVTFALPDDAETEDTGVLNVKKNSDEVKSSFEKRQEKMNEKIASLEKELLEKKPWQLQGEVTAQKRPENSLLEETLHFDHAVRMAPVITEETTLQLEDIIKQRIRDQAWDDVVRKEKPKEDAYEYKKRLTLDHEKSKLSLAEIYEQEYIKLNQQKTAEEENPEHVEIQKMMDSLFLKLDALSNFHFIPKPPVPEIKVVSNLPAITMEEVAPVSVSDAALLAPEEIKEKNKAGDIKTAAEKTATDKKRERRKKKYQKRMKIKEKEKRRKLLEKSSVDQAGKYSKTVASEKLKQLTKTGKASFIKDEGKDKALKSSQAFFSKLQDQVKMQINDAKKTEKKKKKRQDISVHKLKL.

Phosphoserine is present on residues serine 61, serine 120, and serine 139. Residues 105–147 (SLLPESEEQEREEDGSEIEADDKEDLEDLEEEEVSDMGNDDPE) show a composition bias toward acidic residues. Disordered regions lie at residues 105-202 (SLLP…IVDD) and 216-364 (NIEK…EKRQ). Positions 109 to 138 (ESEEQEREEDGSEIEADDKEDLEDLEEEEV) form a coiled coil. The span at 148–162 (MGERAENSSKSDLRK) shows a compositional bias: basic and acidic residues. Phosphoserine occurs at positions 163, 167, and 171. Polar residues predominate over residues 180-190 (LEQQSKVQNKG). Basic and acidic residues-rich tracts occupy residues 193–202 (KPREKSIVDD) and 216–226 (NIEKEEERKDD). Residues 205–239 (FKLSEMEAYLENIEKEEERKDDNDEEEEDIDFFED) are a coiled coil. Residues 227–247 (NDEEEEDIDFFEDIDSDEDEG) show a composition bias toward acidic residues. Serine 242 carries the post-translational modification Phosphoserine. Positions 253-264 (KKLKSGKSSRNL) are enriched in basic residues. Serine 275 and serine 289 each carry phosphoserine. Positions 280 to 290 (TNVHDDELDSN) are enriched in basic and acidic residues. Coiled-coil stretches lie at residues 284 to 324 (DDEL…NKQH) and 348 to 382 (NVKK…LEKK). Residues 291–318 (KEDDEIAEEEAEELSISETDEDDDLQEN) are compositionally biased toward acidic residues. Basic and acidic residues predominate over residues 319–329 (EDNKQHKESLK). Residue lysine 350 forms a Glycyl lysine isopeptide (Lys-Gly) (interchain with G-Cter in SUMO2) linkage. Residues 351–364 (KNSDEVKSSFEKRQ) show a composition bias toward basic and acidic residues. Residues lysine 382 and lysine 394 each participate in a glycyl lysine isopeptide (Lys-Gly) (interchain with G-Cter in SUMO2) cross-link. A coiled-coil region spans residues 469 to 490 (LAEIYEQEYIKLNQQKTAEEEN). Lysine 555 participates in a covalent cross-link: Glycyl lysine isopeptide (Lys-Gly) (interchain with G-Cter in SUMO2). Residues 558 to 575 (NKAGDIKTAAEKTATDKK) show a composition bias toward basic and acidic residues. The tract at residues 558 to 606 (NKAGDIKTAAEKTATDKKRERRKKKYQKRMKIKEKEKRRKLLEKSSVDQ) is disordered. Residues 574 to 604 (KKRERRKKKYQKRMKIKEKEKRRKLLEKSSV) adopt a coiled-coil conformation. Residues 576–598 (RERRKKKYQKRMKIKEKEKRRKL) show a composition bias toward basic residues. Lysine 609 carries the N6-acetyllysine modification. Residues lysine 632 and lysine 649 each participate in a glycyl lysine isopeptide (Lys-Gly) (interchain with G-Cter in SUMO2) cross-link. Residues 648–670 (SKLQDQVKMQINDAKKTEKKKKK) are a coiled coil. Residues 660–681 (DAKKTEKKKKKRQDISVHKLKL) are disordered. The segment covering 672–681 (QDISVHKLKL) has biased composition (basic and acidic residues).

This sequence belongs to the MPP10 family. In terms of assembly, part of the small subunit (SSU) processome, composed of more than 70 proteins and the RNA chaperone small nucleolar RNA (snoRNA) U3. Component of a heterotrimeric complex containing IMP3, IMP4 and MPHOSPH10. Interacts with IMP3 and IMP4. In terms of processing, phosphorylated in M (mitotic) phase.

It is found in the nucleus. The protein resides in the nucleolus. It localises to the chromosome. Its function is as follows. Component of the 60-80S U3 small nucleolar ribonucleoprotein (U3 snoRNP). Required for the early cleavages during pre-18S ribosomal RNA processing. Part of the small subunit (SSU) processome, first precursor of the small eukaryotic ribosomal subunit. During the assembly of the SSU processome in the nucleolus, many ribosome biogenesis factors, an RNA chaperone and ribosomal proteins associate with the nascent pre-rRNA and work in concert to generate RNA folding, modifications, rearrangements and cleavage as well as targeted degradation of pre-ribosomal RNA by the RNA exosome. This is U3 small nucleolar ribonucleoprotein protein MPP10 from Homo sapiens (Human).